Consider the following 329-residue polypeptide: RNA polymerase sigma factor SigB (329 aa).

The span at 1–12 (MTSPSDVEASTE) shows a compositional bias: polar residues. A disordered region spans residues 1–27 (MTSPSDVEASTETVDRGSRRNQTNDNP). The Polymerase core binding signature appears at 120–133 (DLIQEGNLGLIRAM). Residues 290–309 (LDQIGRQFGLSRERVRQIER) constitute a DNA-binding region (H-T-H motif).

The protein belongs to the sigma-70 factor family.

Sigma factors are initiation factors that promote the attachment of RNA polymerase to specific initiation sites and are then released. This is RNA polymerase sigma factor SigB (sigB) from Corynebacterium diphtheriae (strain ATCC 700971 / NCTC 13129 / Biotype gravis).